Consider the following 314-residue polypeptide: Small glutamine-rich tetratricopeptide repeat-containing protein alpha (314 aa).

The tract at residues 65 to 99 (ATASKEMPQDPRGPDRTPPSEEDSAEAERLKTEGN) is disordered. The segment covering 71–83 (MPQDPRGPDRTPP) has biased composition (basic and acidic residues). Residue Thr81 is modified to Phosphothreonine. Ser84 carries the phosphoserine modification. A compositionally biased stretch (basic and acidic residues) spans 90–99 (EAERLKTEGN). TPR repeat units follow at residues 91-124 (AERL…NPAN), 125-158 (AVYF…DPGY), and 159-192 (SKAY…DPDN). Lys137 bears the N6-acetyllysine mark. A disordered region spans residues 249–268 (GMISGGHNPLGTPGSSPQHS). Ser302 is modified (phosphoserine). Thr304 carries the phosphothreonine modification. Ser306 bears the Phosphoserine mark.

It belongs to the SGT family. As to quaternary structure, homodimer. Homooligomer. Interacts with DNAJC5 and DNAJC5B. Interacts (via TPR repeats) with HSP90AA1. Interacts (via Gln-rich region) with SLC2A1. Interacts with HSP90AB1. Interacts (via TPR repeats) with HSPA8/Hsc70; the interaction is direct. Interacts with BAG6 (via ubiquitin-like domain); interaction prevents interaction between BAG6 and RNF126. Forms a multiprotein complex, at least composed of DNAJB12, DNAJB14, HSPA8/Hsc70 and SGTA; interaction with DNAJB14 and HSPA8/Hsc70 is direct. In terms of assembly, (Microbial infection) Interacts with NS1 from parvovirus H-1. In terms of tissue distribution, ubiquitously expressed.

It localises to the cytoplasm. The protein resides in the nucleus. Its function is as follows. Co-chaperone that binds misfolded and hydrophobic patches-containing client proteins in the cytosol. Mediates their targeting to the endoplasmic reticulum but also regulates their sorting to the proteasome when targeting fails. Functions in tail-anchored/type II transmembrane proteins membrane insertion constituting with ASNA1 and the BAG6 complex a targeting module. Functions upstream of the BAG6 complex and ASNA1, binding more rapidly the transmembrane domain of newly synthesized proteins. It is also involved in the regulation of the endoplasmic reticulum-associated misfolded protein catabolic process via its interaction with BAG6: collaborates with the BAG6 complex to maintain hydrophobic substrates in non-ubiquitinated states. Competes with RNF126 for interaction with BAG6, preventing the ubiquitination of client proteins associated with the BAG6 complex. Binds directly to HSC70 and HSP70 and regulates their ATPase activity. This Rattus norvegicus (Rat) protein is Small glutamine-rich tetratricopeptide repeat-containing protein alpha (Sgta).